The primary structure comprises 412 residues: CCA-adding enzyme (412 aa).

Positions 41 and 44 each coordinate ATP. 2 residues coordinate CTP: S41 and K44. Mg(2+)-binding residues include D53, D55, and D106. Residues H129, K149, and Y158 each coordinate ATP. The CTP site is built by H129, K149, and Y158.

It belongs to the tRNA nucleotidyltransferase/poly(A) polymerase family. Archaeal CCA-adding enzyme subfamily. Homodimer. It depends on Mg(2+) as a cofactor.

It carries out the reaction a tRNA precursor + 2 CTP + ATP = a tRNA with a 3' CCA end + 3 diphosphate. The catalysed reaction is a tRNA with a 3' CCA end + 2 CTP + ATP = a tRNA with a 3' CCACCA end + 3 diphosphate. In terms of biological role, catalyzes the addition and repair of the essential 3'-terminal CCA sequence in tRNAs without using a nucleic acid template. Adds these three nucleotides in the order of C, C, and A to the tRNA nucleotide-73, using CTP and ATP as substrates and producing inorganic pyrophosphate. tRNA 3'-terminal CCA addition is required both for tRNA processing and repair. Also involved in tRNA surveillance by mediating tandem CCA addition to generate a CCACCA at the 3' terminus of unstable tRNAs. While stable tRNAs receive only 3'-terminal CCA, unstable tRNAs are marked with CCACCA and rapidly degraded. The protein is CCA-adding enzyme of Saccharolobus islandicus (strain Y.G.57.14 / Yellowstone #1) (Sulfolobus islandicus).